The following is a 1702-amino-acid chain: Immunoglobulin A1 protease autotransporter (1702 aa).

The signal sequence occupies residues 1 to 25 (MLNKKFKLNFIALTVAYALTPYTEA). One can recognise a Peptidase S6 domain in the interval 26 to 332 (ALVRDDVDYQ…NIYKPEFAKT (307 aa)). The active site involves Ser-288. Residues 991–1411 (VEKRNQTVDT…GSDRSTVALR (421 aa)) form a disordered region. A compositionally biased stretch (polar residues) spans 997-1021 (TVDTTNITTPNNIQADVPSVPSNNE). Residues 1037–1047 (TPSETTETVAE) are compositionally biased toward low complexity. The span at 1049 to 1061 (SKQESKTVEKNEQ) shows a compositional bias: basic and acidic residues. Over residues 1082-1095 (KANTQTNEVAQSGS) the composition is skewed to polar residues. Basic and acidic residues-rich tracts occupy residues 1104-1132 (EIKETAKVEKEEKAKVEKEEKAKVEKDEI) and 1150-1162 (APKEVSTDTKVEE). Repeat copies occupy residues 1109–1116 (AKVEKEEK) and 1117–1124 (AKVEKEEK). Residues 1109–1124 (AKVEKEEKAKVEKEEK) are 2 X 8 AA tandem repeats of A-K-V-E-K-E-E-K. 2 stretches are compositionally biased toward polar residues: residues 1163–1186 (TQVQAQPQTQSTTVAAAEATSPNS) and 1207–1218 (VSKNQTENTTDQ). Basic and acidic residues predominate over residues 1219 to 1234 (PTEREKTAKVETEKTQ). Polar residues-rich tracts occupy residues 1235–1255 (EPPQVASQASPKQEQSETVQP), 1263–1305 (NVPT…TAIT), and 1316–1341 (TETAASTEDASQHKANTVADNSVANN). Residues 1360 to 1378 (ETSAEETTAASTDETTIAD) are compositionally biased toward low complexity. Positions 1382 to 1392 (RSKPNRRSRRS) are enriched in basic residues. The 253-residue stretch at 1450–1702 (NNEGQYNVWV…TAELKLSFSF (253 aa)) folds into the Autotransporter domain.

The protein resides in the periplasm. Its subcellular location is the secreted. The protein localises to the cell surface. It localises to the cell outer membrane. The enzyme catalyses Cleavage of immunoglobulin A molecules at certain Pro-|-Xaa bonds in the hinge region. No small molecule substrates are known.. In terms of biological role, virulence factor; cleaves host immunoglobulin A producing intact Fc and Fab fragments. The polypeptide is Immunoglobulin A1 protease autotransporter (iga) (Haemophilus influenzae).